A 478-amino-acid chain; its full sequence is MSVPLLKIGAVLSTMAMVTNWMSQTLPSLVGLNSTVSRAGSSEKITLFQSPEEGWQLYTSAQAPDGKCICTAVIPAQSTCARDGRSRELRQLMEKVQNVSQSMEVLELRTYRDLQYVRSMETLMRSLDARLRTADGSVSAKSFQELKDRMTELLPLSSVLEQYKADTRTIVRLREEVRNLSGNLAAIQEEMGAYGYEDLQQRVMALEARLHACAQKLGCGKLTGVSNPITIRAMGSRFGSWMTDTMAPSADSRVWYMDGYYKGRRVLEFRTLGDFIKGQNFIQHLLPQPWAGTGHVVYNGSLFYNKYQSNVVVKYHFRSRSVLVQRSLPGAGYNNTFPYSWGGFSDMDFMVDESGLWAVYTTNQNAGNIVVSRLDPHTLEVVRSWDTGYPKRSAGEAFMICGVLYVTNSHLAGAKVYFAYFTNTSSYEYTDVPFHNQYSHISMLDYNPRERALYTWNNGHQVLYNVTLFHVISTAGDP.

A signal peptide spans 1–16; the sequence is MSVPLLKIGAVLSTMA. Residues Asn33, Asn98, Asn179, Asn299, Asn334, Asn423, and Asn465 are each glycosylated (N-linked (GlcNAc...) asparagine). Coiled coils occupy residues 86-109 and 160-218; these read SREL…LELR and LEQY…QKLG. In terms of domain architecture, Olfactomedin-like spans 218–470; the sequence is GCGKLTGVSN…QVLYNVTLFH (253 aa). Cys219 and Cys401 form a disulfide bridge.

Peripherally associated with AMPAR complex. AMPAR complex consists of an inner core made of 4 pore-forming GluA/GRIA proteins (GRIA1, GRIA2, GRIA3 and GRIA4) and 4 major auxiliary subunits arranged in a twofold symmetry. One of the two pairs of distinct binding sites is occupied either by CNIH2, CNIH3 or CACNG2, CACNG3. The other harbors CACNG2, CACNG3, CACNG4, CACNG8 or GSG1L. This inner core of AMPAR complex is complemented by outer core constituents binding directly to the GluA/GRIA proteins at sites distinct from the interaction sites of the inner core constituents. Outer core constituents include at least PRRT1, PRRT2, CKAMP44/SHISA9, FRRS1L and NRN1. The proteins of the inner and outer core serve as a platform for other, more peripherally associated AMPAR constituents, including OLFM2. Alone or in combination, these auxiliary subunits control the gating and pharmacology of the AMPAR complex and profoundly impact their biogenesis and protein processing. Interacts with GRIA2. Interacts with OLFM1 and OLFM3. Interacts with SRF; the interaction promotes dissociation of SRF from the transcriptional repressor HEY2. Interacts with RUNX2. In terms of tissue distribution, expressed in the brain (at protein level). Expressed in carotid arteries and the aorta, mainly in aortic SMCs.

The protein localises to the secreted. It is found in the synapse. Its subcellular location is the membrane. The protein resides in the nucleus. It localises to the cytoplasm. Functionally, involved in transforming growth factor beta (TGF-beta)-induced smooth muscle differentiation. TGF-beta induces expression and nuclear translocation of OLFM2 where it binds to SRF, causing its dissociation from the transcriptional repressor HEY2/HERP1 and facilitating binding of SRF to target genes. Plays a role in AMPAR complex organization. Is a regulator of vascular smooth-muscle cell (SMC) phenotypic switching, that acts by promoting RUNX2 and inhibiting MYOCD binding to SRF. SMC phenotypic switching is the process through which vascular SMCs undergo transition between a quiescent contractile phenotype and a proliferative synthetic phenotype in response to pathological stimuli. SMC phenotypic plasticity is essential for vascular development and remodeling. The sequence is that of Noelin-2 (Olfm2) from Rattus norvegicus (Rat).